The sequence spans 604 residues: Probable translation initiation factor IF-2 (604 aa).

The region spanning 18 to 232 (IRTPIVCVLG…VLIGLAQRYM (215 aa)) is the tr-type G domain. Residues 27–34 (GHVDHGKT) are G1. 27 to 34 (GHVDHGKT) lines the GTP pocket. Residues 52–56 (AITQH) are G2. A G3 region spans residues 88–91 (DTPG). GTP contacts are provided by residues 88 to 92 (DTPGH) and 142 to 145 (TKLD). Residues 142–145 (TKLD) form a G4 region. Residues 210-212 (SAH) form a G5 region.

The protein belongs to the TRAFAC class translation factor GTPase superfamily. Classic translation factor GTPase family. IF-2 subfamily.

Functionally, function in general translation initiation by promoting the binding of the formylmethionine-tRNA to ribosomes. Seems to function along with eIF-2. This Methanospirillum hungatei JF-1 (strain ATCC 27890 / DSM 864 / NBRC 100397 / JF-1) protein is Probable translation initiation factor IF-2.